The following is a 410-amino-acid chain: Dual-specificity RNA methyltransferase RlmN (410 aa).

The Proton acceptor role is filled by glutamate 123. In terms of domain architecture, Radical SAM core spans glutamate 129–leucine 378. Residues cysteine 136 and cysteine 381 are joined by a disulfide bond. Cysteine 143, cysteine 147, and cysteine 150 together coordinate [4Fe-4S] cluster. S-adenosyl-L-methionine contacts are provided by residues glycine 207–glutamate 208, serine 239, serine 261–histidine 263, and asparagine 338. The active-site S-methylcysteine intermediate is the cysteine 381.

The protein belongs to the radical SAM superfamily. RlmN family. [4Fe-4S] cluster is required as a cofactor.

The protein localises to the cytoplasm. It carries out the reaction adenosine(2503) in 23S rRNA + 2 reduced [2Fe-2S]-[ferredoxin] + 2 S-adenosyl-L-methionine = 2-methyladenosine(2503) in 23S rRNA + 5'-deoxyadenosine + L-methionine + 2 oxidized [2Fe-2S]-[ferredoxin] + S-adenosyl-L-homocysteine. The catalysed reaction is adenosine(37) in tRNA + 2 reduced [2Fe-2S]-[ferredoxin] + 2 S-adenosyl-L-methionine = 2-methyladenosine(37) in tRNA + 5'-deoxyadenosine + L-methionine + 2 oxidized [2Fe-2S]-[ferredoxin] + S-adenosyl-L-homocysteine. Functionally, specifically methylates position 2 of adenine 2503 in 23S rRNA and position 2 of adenine 37 in tRNAs. m2A2503 modification seems to play a crucial role in the proofreading step occurring at the peptidyl transferase center and thus would serve to optimize ribosomal fidelity. This chain is Dual-specificity RNA methyltransferase RlmN, found in Mesorhizobium japonicum (strain LMG 29417 / CECT 9101 / MAFF 303099) (Mesorhizobium loti (strain MAFF 303099)).